The following is a 242-amino-acid chain: Lysosomal membrane ascorbate-dependent ferrireductase CYB561A3 (242 aa).

At 1-4 the chain is on the cytoplasmic side; it reads MASG. The chain crosses the membrane as a helical span at residues 5–25; it reads WFYLSCMVLGSLGSMCILFTA. Residues 12–219 form the Cytochrome b561 domain; it reads VLGSLGSMCI…FGLLVLYVLL (208 aa). Residues 26-40 are Lumenal-facing; sequence YWMQYWRGGFAWDGT. A helical membrane pass occupies residues 41–61; it reads VLMFNWHPVLMVAGMVVLYGA. H47 and R67 together coordinate heme b. Residues 62-81 lie on the Cytoplasmic side of the membrane; the sequence is ASLVYRLPSSWVGPRLPWKV. L-ascorbate-binding residues include R76 and K80. Residues 82–102 traverse the membrane as a helical segment; that stretch reads LHAALHLLAFTCTVVGLIAVF. Heme b contacts are provided by residues H83, 112–115, and H117; that span reads HLYS. Residues 103 to 119 lie on the Lumenal side of the membrane; it reads RFHNHSRIAHLYSLHSW. The helical transmembrane segment at 120-140 threads the bilayer; the sequence is LGITTVVLFACQWFLGFAVFL. At 141 to 154 the chain is on the cytoplasmic side; it reads LPWASQWLRSLLKP. L-ascorbate is bound at residue R149. A helical transmembrane segment spans residues 155–175; sequence LHVFFGACILSLSITSVISGI. Residues H156 and E177 each contribute to the heme b site. Residues 176 to 202 are Lumenal-facing; that stretch reads NEKLFFVLKNATKPYSSLPGEAVFANS. The helical transmembrane segment at 203-223 threads the bilayer; it reads TGLLVVAFGLLVLYVLLASSW. K224 serves as a coordination point for heme b. The Cytoplasmic portion of the chain corresponds to 224–242; it reads KRPDPGALTDRQPLLHDRE.

As to quaternary structure, homodimer. Heme b serves as cofactor. Post-translationally, N-glycosylated. As to expression, present in lung, spleen, thymus and testis. Present at low level in brain, heart, liver and kidney. Expressed in the alveolar macrophages of the lung, in the white pulp of the spleen, widespread in the thymus, and in the Sertoli cells of the testis (at protein level).

It is found in the late endosome membrane. Its subcellular location is the lysosome membrane. The enzyme catalyses Fe(3+)(out) + L-ascorbate(in) = monodehydro-L-ascorbate radical(in) + Fe(2+)(out) + H(+). Its function is as follows. Transmembrane reductase that uses ascorbate as an electron donor in the cytoplasm and transfers electrons across membranes to reduce iron cations Fe(3+) into Fe(2+) in the lumen of the late endosome and lysosome. Reduced iron can then be extruded from the late endosome and lysosome to the cytoplasm by divalent metal-specific transporters. It is therefore most probably involved in endosomal and lysosomal cellular iron homeostasis. This Mus musculus (Mouse) protein is Lysosomal membrane ascorbate-dependent ferrireductase CYB561A3.